A 501-amino-acid polypeptide reads, in one-letter code: G protein-activated inward rectifier potassium channel 1 (501 aa).

Residues 1–40 (MSALRRKFGDDYQVVTTSSSGSGLQPQGPGQGPQQQLVPK) form a disordered region. The Cytoplasmic portion of the chain corresponds to 1-80 (MSALRRKFGD…LFTTLVDLKW (80 aa)). Over residues 18–37 (SSSGSGLQPQGPGQGPQQQL) the composition is skewed to low complexity. Residues 81–105 (RWNLFIFILTYTVAWLFMASMWWVI) form a helical membrane-spanning segment. Residues 106–129 (AYTRGDLNKAHVGNYTPCVANVYN) are Extracellular-facing. Asn119 is a glycosylation site (N-linked (GlcNAc...) asparagine). The segment at residues 130-141 (FPSAFLFFIETE) is an intramembrane region (helical; Pore-forming). Positions 142–148 (ATIGYGY) form an intramembrane region, pore-forming. The Selectivity filter motif lies at 143–148 (TIGYGY). Residues 149-157 (RYITDKCPE) lie on the Extracellular side of the membrane. Residues 158-179 (GIILFLFQSILGSIVDAFLIGC) form a helical membrane-spanning segment. At 180–501 (MFIKMSQPKK…LRKMNSDRFT (322 aa)) the chain is on the cytoplasmic side. Residues 182 to 209 (IKMSQPKKRAETLMFSEHAVISMRDGKL) form a polyphosphoinositide (PIP2)-binding region. A phosphoserine mark is found at Ser385 and Ser424. The span at 456–467 (TKMLSDPMSQSV) shows a compositional bias: polar residues. The segment at 456 to 501 (TKMLSDPMSQSVADLPPKLQKMAGGPTRMEGNLPAKLRKMNSDRFT) is disordered.

This sequence belongs to the inward rectifier-type potassium channel (TC 1.A.2.1) family. KCNJ3 subfamily. Associates with KCNJ5/GIRK4 or KCNJ6/GIRK2 to form a G-protein activated heteromultimer pore-forming unit. The resulting inward current is much larger. Associates with KCNJ9/GIRK3 to form a G-protein activated heteromultimer pore-forming unit.

It localises to the membrane. The catalysed reaction is K(+)(in) = K(+)(out). Its activity is regulated as follows. Heteromultimer composed of KCNJ3/GIRK1 and KCNJ5/GIRK4 is activated by phosphatidylinositol 4,5 biphosphate (PtdIns(4,5)P2). Functionally, inward rectifier potassium channels are characterized by a greater tendency to allow potassium to flow into the cell rather than out of it. Their voltage dependence is regulated by the concentration of extracellular potassium; as external potassium is raised, the voltage range of the channel opening shifts to more positive voltages. The inward rectification is mainly due to the blockage of outward current by internal magnesium. This potassium channel is controlled by G proteins. This receptor plays a crucial role in regulating the heartbeat. Forms a functional channel in association with KCNJ9/GIRK3. The chain is G protein-activated inward rectifier potassium channel 1 (Kcnj3) from Rattus norvegicus (Rat).